The sequence spans 351 residues: MFYLLGLRLLKYITFRMAYATIFAFLLSLIIGPHIILRLKKLRVDQVLREDGPKRHLSEKAGIPTMGGILIFFCVFISLVFWSNILNVYFLIMLFVMLGFAFLGFIDDFLKIKKKTSDGLKARFKIYGQIIFSFISVGTLYYFGSEHVSMIYFPFIKSFRIDLGLFYIPFGMFILISASNSFNLTDGLDGLAIGLSIVITGALIIIAYLTSRADFAAYLHIPNIKGSEELVIFLGALLGGSFGFLWFNAYPAKIMMGDTGSLALGAILGMAALIVKSEILFSILAGVFIIETMSVIIQVMVYKKTKKRVFKMAPLHHHFEELGWSEMQVVIRFWIIGLIFAIIALSTIKIR.

10 helical membrane-spanning segments follow: residues 17 to 37 (MAYA…HIIL), 62 to 82 (GIPT…LVFW), 85 to 105 (ILNV…FLGF), 124 to 144 (FKIY…YYFG), 161 to 181 (IDLG…ASNS), 190 to 210 (GLAI…AYLT), 230 to 250 (LVIF…FNAY), 254 to 274 (IMMG…AALI), 279 to 299 (ILFS…IIQV), and 328 to 348 (QVVI…LSTI).

This sequence belongs to the glycosyltransferase 4 family. MraY subfamily. Mg(2+) serves as cofactor.

The protein localises to the cell inner membrane. The enzyme catalyses UDP-N-acetyl-alpha-D-muramoyl-L-alanyl-gamma-D-glutamyl-meso-2,6-diaminopimeloyl-D-alanyl-D-alanine + di-trans,octa-cis-undecaprenyl phosphate = di-trans,octa-cis-undecaprenyl diphospho-N-acetyl-alpha-D-muramoyl-L-alanyl-D-glutamyl-meso-2,6-diaminopimeloyl-D-alanyl-D-alanine + UMP. It participates in cell wall biogenesis; peptidoglycan biosynthesis. Its function is as follows. Catalyzes the initial step of the lipid cycle reactions in the biosynthesis of the cell wall peptidoglycan: transfers peptidoglycan precursor phospho-MurNAc-pentapeptide from UDP-MurNAc-pentapeptide onto the lipid carrier undecaprenyl phosphate, yielding undecaprenyl-pyrophosphoryl-MurNAc-pentapeptide, known as lipid I. This chain is Phospho-N-acetylmuramoyl-pentapeptide-transferase, found in Borrelia garinii subsp. bavariensis (strain ATCC BAA-2496 / DSM 23469 / PBi) (Borreliella bavariensis).